The sequence spans 343 residues: GTPase Obg (343 aa).

The region spanning 1–157 (MKFIDEVSIS…IEVRLELKLI (157 aa)) is the Obg domain. A disordered region spans residues 13-44 (SGRGGPGCVSFRRESMQARGGPDGGNGGKGGD). The span at 33 to 43 (GPDGGNGGKGG) shows a compositional bias: gly residues. The 181-residue stretch at 158–338 (ADVGIVGFPN…FVQELARQIL (181 aa)) folds into the OBG-type G domain. Residues 164-171 (GFPNAGKS), 189-193 (FTTLT), 211-214 (DIPG), 290-293 (NKID), and 319-321 (SAV) each bind GTP. Ser-171 and Thr-191 together coordinate Mg(2+).

Belongs to the TRAFAC class OBG-HflX-like GTPase superfamily. OBG GTPase family. As to quaternary structure, monomer. It depends on Mg(2+) as a cofactor.

The protein resides in the cytoplasm. An essential GTPase which binds GTP, GDP and possibly (p)ppGpp with moderate affinity, with high nucleotide exchange rates and a fairly low GTP hydrolysis rate. Plays a role in control of the cell cycle, stress response, ribosome biogenesis and in those bacteria that undergo differentiation, in morphogenesis control. The sequence is that of GTPase Obg from Bdellovibrio bacteriovorus (strain ATCC 15356 / DSM 50701 / NCIMB 9529 / HD100).